A 1096-amino-acid polypeptide reads, in one-letter code: Protein EMBRYONIC FLOWER 1 (1096 aa).

8 disordered regions span residues 155–189 (KARG…EKLN), 274–296 (KTSG…VRGR), 315–348 (GATS…KGKQ), 366–420 (ETSQ…KKPV), 563–612 (LSRV…DIPM), 629–651 (DKEE…KNAL), 1007–1032 (DKEK…KNSS), and 1070–1096 (FKKK…TQNA). 2 short sequence motifs (nuclear localization signal) span residues 170-177 (SRKLVSPE) and 281-288 (IRKEESAL). Basic and acidic residues predominate over residues 281 to 294 (IRKEESALKKESVR). The span at 315-337 (GATSENASKSCDSDQGNSESTDS) shows a compositional bias: polar residues. Residues 337 to 617 (SGFDRTPFKG…DDIPMEIVEL (281 aa)) are DNA-binding. Residues 371-381 (GIKEHDADPSK) show a composition bias toward basic and acidic residues. Polar residues predominate over residues 382-394 (RSTPAHSLFTGND). Residues 572 to 601 (SGADRKGKTVMVQEHHGAPRSQSHDRKETT) are compositionally biased toward basic and acidic residues. Positions 866–1096 (LDPRLRSTTP…KPVCPPTQNA (231 aa)) are DNA-binding. Over residues 1018–1032 (SCNNNASAGPVKNSS) the composition is skewed to polar residues. The Nuclear localization signal 3 motif lies at 1071–1078 (KKKPAVCK).

In terms of assembly, interacts with MSI1. In terms of tissue distribution, expressed in mature embryo, root tips, cotyledons, leaves, stems, shoot apex, and flower clusters, with highest levels in flowers. The presence in the shoot apical meristem (SAM) is required to maintain vegetative development and prevent early flowering.

It localises to the nucleus. Functionally, transcription repressor that regulates phase transition during shoot, flower and seeds development. Controls leaves development, shoot architecture and flowering by delaying both the vegetative to reproductive transition and flower initiation. Participates in polycomb group (PcG) protein complex-mediated (including EMF2) silencing of the flower homeotic genes AGAMOUS (AG), PISTILLATA (PI), and APETALA3 (AP3), as well as of some regulatory genes such as ABSCISIC ACID INSENSITIVE3 (ABI3), LONG VEGETATIVE PHASE1 (LOV1), and FLOWERING LOCUS C (FLC) during vegetative development. Required for histone methylation or for maintaining a stable histone methylation (e.g. H3K27me3) pattern of repressed target genes (including genes involved in salt stress response and flower development); this repression is counteracted by ULT1. Can bind non specifically DNA (both double- and single-stranded) and RNA. The sequence is that of Protein EMBRYONIC FLOWER 1 from Arabidopsis thaliana (Mouse-ear cress).